The sequence spans 629 residues: tRNA uridine 5-carboxymethylaminomethyl modification enzyme MnmG (629 aa).

Residues G14–G19, V126, and S181 contribute to the FAD site. G273–F287 lines the NAD(+) pocket. Residue Q370 coordinates FAD.

This sequence belongs to the MnmG family. Homodimer. Heterotetramer of two MnmE and two MnmG subunits. FAD is required as a cofactor.

Its subcellular location is the cytoplasm. In terms of biological role, NAD-binding protein involved in the addition of a carboxymethylaminomethyl (cmnm) group at the wobble position (U34) of certain tRNAs, forming tRNA-cmnm(5)s(2)U34. This Bacillus mycoides (strain KBAB4) (Bacillus weihenstephanensis) protein is tRNA uridine 5-carboxymethylaminomethyl modification enzyme MnmG.